Here is a 367-residue protein sequence, read N- to C-terminus: Anhydro-N-acetylmuramic acid kinase (367 aa).

Glycine 10–aspartate 17 contacts ATP.

The protein belongs to the anhydro-N-acetylmuramic acid kinase family.

The enzyme catalyses 1,6-anhydro-N-acetyl-beta-muramate + ATP + H2O = N-acetyl-D-muramate 6-phosphate + ADP + H(+). Its pathway is amino-sugar metabolism; 1,6-anhydro-N-acetylmuramate degradation. The protein operates within cell wall biogenesis; peptidoglycan recycling. Its function is as follows. Catalyzes the specific phosphorylation of 1,6-anhydro-N-acetylmuramic acid (anhMurNAc) with the simultaneous cleavage of the 1,6-anhydro ring, generating MurNAc-6-P. Is required for the utilization of anhMurNAc either imported from the medium or derived from its own cell wall murein, and thus plays a role in cell wall recycling. This is Anhydro-N-acetylmuramic acid kinase from Aliivibrio fischeri (strain ATCC 700601 / ES114) (Vibrio fischeri).